The following is a 507-amino-acid chain: Glycerol kinase (507 aa).

Threonine 15 is an ADP binding site. ATP contacts are provided by threonine 15, threonine 16, and serine 17. Threonine 15 lines the sn-glycerol 3-phosphate pocket. ADP is bound at residue arginine 19. Sn-glycerol 3-phosphate is bound by residues arginine 85, glutamate 86, tyrosine 137, and aspartate 250. Residues arginine 85, glutamate 86, tyrosine 137, aspartate 250, and glutamine 251 each contribute to the glycerol site. Threonine 272, glycine 316, and glycine 418 together coordinate ADP. Positions 272, 316, and 418 each coordinate ATP.

It belongs to the FGGY kinase family.

The catalysed reaction is glycerol + ATP = sn-glycerol 3-phosphate + ADP + H(+). The protein operates within polyol metabolism; glycerol degradation via glycerol kinase pathway; sn-glycerol 3-phosphate from glycerol: step 1/1. Its activity is regulated as follows. Inhibited by fructose 1,6-bisphosphate (FBP). Key enzyme in the regulation of glycerol uptake and metabolism. Catalyzes the phosphorylation of glycerol to yield sn-glycerol 3-phosphate. The sequence is that of Glycerol kinase from Malacoplasma penetrans (strain HF-2) (Mycoplasma penetrans).